The following is a 269-amino-acid chain: WW domain-binding protein 1 (269 aa).

2 short sequence motifs (PPxY motif) span residues 124 to 127 and 137 to 141; these read PPAY and PPPPY. 2 disordered regions span residues 169 to 203 and 249 to 269; these read EGTN…PPSC and PPES…GDIP. Residues 174–183 are compositionally biased toward polar residues; that stretch reads EGVSSHQSAP.

As to quaternary structure, interacts with NEDD4. Binds to the WW domain of YAP1, WWP1 and WWP2. Interacts with WWOX. Expressed in most tissues but at significantly lower levels in placenta, lung, liver, and kidney.

This chain is WW domain-binding protein 1 (WBP1), found in Homo sapiens (Human).